The primary structure comprises 161 residues: Cyclic pyranopterin monophosphate synthase (161 aa).

Residues 75–77 and 113–114 each bind substrate; these read LCH and ME. Residue Asp-128 is part of the active site.

Belongs to the MoaC family. As to quaternary structure, homohexamer; trimer of dimers.

The enzyme catalyses (8S)-3',8-cyclo-7,8-dihydroguanosine 5'-triphosphate = cyclic pyranopterin phosphate + diphosphate. It participates in cofactor biosynthesis; molybdopterin biosynthesis. In terms of biological role, catalyzes the conversion of (8S)-3',8-cyclo-7,8-dihydroguanosine 5'-triphosphate to cyclic pyranopterin monophosphate (cPMP). The chain is Cyclic pyranopterin monophosphate synthase from Methylobacillus flagellatus (strain ATCC 51484 / DSM 6875 / VKM B-1610 / KT).